Reading from the N-terminus, the 67-residue chain is Large ribosomal subunit protein bL32 (67 aa).

The segment covering 1 to 19 (MAVPKRKMSRANTRMRRSQ) has biased composition (basic residues). The tract at residues 1-22 (MAVPKRKMSRANTRMRRSQWKA) is disordered.

Belongs to the bacterial ribosomal protein bL32 family.

This is Large ribosomal subunit protein bL32 from Kocuria rhizophila (strain ATCC 9341 / DSM 348 / NBRC 103217 / DC2201).